The sequence spans 124 residues: Large ribosomal subunit protein eL22 (124 aa).

Belongs to the eukaryotic ribosomal protein eL22 family. Component of the large ribosomal subunit. Mature ribosomes consist of a small (40S) and a large (60S) subunit. The 40S subunit contains about 32 different proteins and 1 molecule of RNA (18S). The 60S subunit contains 45 different proteins and 3 molecules of RNA (25S, 5.8S and 5S).

The protein resides in the cytoplasm. Component of the ribosome, a large ribonucleoprotein complex responsible for the synthesis of proteins in the cell. The small ribosomal subunit (SSU) binds messenger RNAs (mRNAs) and translates the encoded message by selecting cognate aminoacyl-transfer RNA (tRNA) molecules. The large subunit (LSU) contains the ribosomal catalytic site termed the peptidyl transferase center (PTC), which catalyzes the formation of peptide bonds, thereby polymerizing the amino acids delivered by tRNAs into a polypeptide chain. The nascent polypeptides leave the ribosome through a tunnel in the LSU and interact with protein factors that function in enzymatic processing, targeting, and the membrane insertion of nascent chains at the exit of the ribosomal tunnel. This Candida albicans (strain SC5314 / ATCC MYA-2876) (Yeast) protein is Large ribosomal subunit protein eL22.